The following is a 260-amino-acid chain: Hydroxyethylthiazole kinase 1 (260 aa).

Position 39 (M39) interacts with substrate. ATP contacts are provided by R115 and T160. G187 provides a ligand contact to substrate.

The protein belongs to the Thz kinase family. Mg(2+) serves as cofactor.

The enzyme catalyses 5-(2-hydroxyethyl)-4-methylthiazole + ATP = 4-methyl-5-(2-phosphooxyethyl)-thiazole + ADP + H(+). It functions in the pathway cofactor biosynthesis; thiamine diphosphate biosynthesis; 4-methyl-5-(2-phosphoethyl)-thiazole from 5-(2-hydroxyethyl)-4-methylthiazole: step 1/1. Its function is as follows. Catalyzes the phosphorylation of the hydroxyl group of 4-methyl-5-beta-hydroxyethylthiazole (THZ). The protein is Hydroxyethylthiazole kinase 1 of Streptococcus pneumoniae serotype 19F (strain G54).